A 376-amino-acid polypeptide reads, in one-letter code: Alcohol dehydrogenase 1 (376 aa).

An N-acetylserine modification is found at Ser2. Zn(2+)-binding residues include Cys47, His68, Cys98, Cys101, Cys104, Cys112, and Cys176. Residues 201-206, Asp225, and Lys230 contribute to the NAD(+) site; that span reads GLGGVG. Lys235 is subject to N6-succinyllysine. 294-296 is a binding site for NAD(+); it reads VGV. Lys341 is modified (N6-succinyllysine). Arg371 is an NAD(+) binding site.

It belongs to the zinc-containing alcohol dehydrogenase family. Class-I subfamily. In terms of assembly, dimer of identical or non-identical chains of three types (A, B, C), which are coded by 3 separate genes at different loci. Zn(2+) serves as cofactor.

The protein resides in the cytoplasm. It carries out the reaction a primary alcohol + NAD(+) = an aldehyde + NADH + H(+). The enzyme catalyses a secondary alcohol + NAD(+) = a ketone + NADH + H(+). The polypeptide is Alcohol dehydrogenase 1 (Adh1) (Rattus norvegicus (Rat)).